A 370-amino-acid polypeptide reads, in one-letter code: UDP-N-acetylglucosamine--N-acetylmuramyl-(pentapeptide) pyrophosphoryl-undecaprenol N-acetylglucosamine transferase (370 aa).

UDP-N-acetyl-alpha-D-glucosamine contacts are provided by residues Thr15–Gly17, Asn129, Arg170, Ser199, Ile254, and Gln299.

It belongs to the glycosyltransferase 28 family. MurG subfamily.

Its subcellular location is the cell inner membrane. The catalysed reaction is di-trans,octa-cis-undecaprenyl diphospho-N-acetyl-alpha-D-muramoyl-L-alanyl-D-glutamyl-meso-2,6-diaminopimeloyl-D-alanyl-D-alanine + UDP-N-acetyl-alpha-D-glucosamine = di-trans,octa-cis-undecaprenyl diphospho-[N-acetyl-alpha-D-glucosaminyl-(1-&gt;4)]-N-acetyl-alpha-D-muramoyl-L-alanyl-D-glutamyl-meso-2,6-diaminopimeloyl-D-alanyl-D-alanine + UDP + H(+). It participates in cell wall biogenesis; peptidoglycan biosynthesis. Cell wall formation. Catalyzes the transfer of a GlcNAc subunit on undecaprenyl-pyrophosphoryl-MurNAc-pentapeptide (lipid intermediate I) to form undecaprenyl-pyrophosphoryl-MurNAc-(pentapeptide)GlcNAc (lipid intermediate II). The sequence is that of UDP-N-acetylglucosamine--N-acetylmuramyl-(pentapeptide) pyrophosphoryl-undecaprenol N-acetylglucosamine transferase from Magnetococcus marinus (strain ATCC BAA-1437 / JCM 17883 / MC-1).